We begin with the raw amino-acid sequence, 550 residues long: Chaperonin GroEL (550 aa).

ATP-binding positions include Thr29 to Pro32, Lys50, Asp86 to Thr90, Gly417, and Asp499.

Belongs to the chaperonin (HSP60) family. In terms of assembly, forms a cylinder of 14 subunits composed of two heptameric rings stacked back-to-back. Interacts with the co-chaperonin GroES.

Its subcellular location is the cytoplasm. It catalyses the reaction ATP + H2O + a folded polypeptide = ADP + phosphate + an unfolded polypeptide.. Together with its co-chaperonin GroES, plays an essential role in assisting protein folding. The GroEL-GroES system forms a nano-cage that allows encapsulation of the non-native substrate proteins and provides a physical environment optimized to promote and accelerate protein folding. In Ehrlichia chaffeensis, this protein is Chaperonin GroEL.